A 528-amino-acid polypeptide reads, in one-letter code: Protein spinster homolog 1 (528 aa).

The segment at 1-44 (MSGSDTAPFLSQADDTDDGPAPGTPGLPGSMGNPKSEDPAVPDQ) is disordered. The next 12 membrane-spanning stretches (helical) occupy residues 50-70 (ITGL…YINL), 98-118 (GLIQ…FGYL), 126-146 (YLMC…SFIP), 160-180 (VGVG…DLFV), 187-207 (MLSV…IAGS), 218-238 (WALR…FLVV), 278-298 (LGFT…PAFL), 323-343 (LIFG…GVEI), 357-377 (LVCA…LACA), 381-401 (IVAT…NWAI), 421-441 (FQIV…IGSI), and 465-485 (MLCA…AIFI). Serine 518 is subject to Phosphoserine.

This sequence belongs to the major facilitator superfamily. Spinster (TC 2.A.1.49) family. Interacts with BCL2 and BCL2L1.

The protein resides in the lysosome membrane. It carries out the reaction a 1-acyl-sn-glycero-3-phosphocholine(out) + H(+)(out) = a 1-acyl-sn-glycero-3-phosphocholine(in) + H(+)(in). It catalyses the reaction 1-hexadecanoyl-sn-glycero-3-phosphocholine(out) + H(+)(out) = 1-hexadecanoyl-sn-glycero-3-phosphocholine(in) + H(+)(in). The enzyme catalyses 1-(9Z-octadecenoyl)-sn-glycero-3-phosphocholine(out) + H(+)(out) = 1-(9Z-octadecenoyl)-sn-glycero-3-phosphocholine(in) + H(+)(in). The catalysed reaction is 1-(5Z,8Z,11Z,14Z-eicosatetraenoyl)-sn-glycero-3-phosphocholine(out) + H(+)(out) = 1-(5Z,8Z,11Z,14Z-eicosatetraenoyl)-sn-glycero-3-phosphocholine(in) + H(+)(in). It carries out the reaction 1-(4Z,7Z,10Z,13Z,16Z,19Z-docosahexaenoyl)-sn-glycero-3-phosphocholine(out) + H(+)(out) = 1-(4Z,7Z,10Z,13Z,16Z,19Z-docosahexaenoyl)-sn-glycero-3-phosphocholine(in) + H(+)(in). It catalyses the reaction a 1-acyl-sn-glycero-3-phosphoethanolamine(out) + H(+)(out) = a 1-acyl-sn-glycero-3-phosphoethanolamine(in) + H(+)(in). The enzyme catalyses 1-(9Z-octadecenoyl)-sn-glycero-3-phosphoethanolamine(out) + H(+)(out) = 1-(9Z-octadecenoyl)-sn-glycero-3-phosphoethanolamine(in) + H(+)(in). The catalysed reaction is 1-acyl-sn-glycero-3-phospho-(1'-sn-glycerol)(out) + H(+)(out) = 1-acyl-sn-glycero-3-phospho-(1'-sn-glycerol)(in) + H(+)(in). It carries out the reaction 1-(9Z-octadecenoyl)-sn-glycero-3-phospho-(1'-sn-glycerol)(out) + H(+)(out) = 1-(9Z-octadecenoyl)-sn-glycero-3-phospho-(1'-sn-glycerol)(in) + H(+)(in). It catalyses the reaction a 1-O-(1Z-alkenyl)-sn-glycero-3-phosphocholine(out) + H(+)(out) = a 1-O-(1Z-alkenyl)-sn-glycero-3-phosphocholine(in) + H(+)(in). The enzyme catalyses 1-(1Z-hexadecenyl)-sn-glycero-3-phosphocholine(out) + H(+)(out) = 1-(1Z-hexadecenyl)-sn-glycero-3-phosphocholine(in) + H(+)(in). The catalysed reaction is a 1-O-(1Z-alkenyl)-sn-glycero-3-phosphoethanolamine(out) + H(+)(out) = a 1-O-(1Z-alkenyl)-sn-glycero-3-phosphoethanolamine(in) + H(+)(in). It carries out the reaction 1-O-(1Z-hexadecenyl)-sn-glycero-3-phosphoethanolamine(out) + H(+)(out) = 1-O-(1Z-hexadecenyl)-sn-glycero-3-phosphoethanolamine(in) + H(+)(in). Plays a critical role in the phospholipid salvage pathway from lysosomes to the cytosol. Mediates the rate-limiting, proton-dependent, lysosomal efflux of lysophospholipids, which can then be reacylated by acyltransferases in the endoplasmic reticulum to form phospholipids. Selective for zwitterionic headgroups such as lysophosphatidylcholine (LPC) and lysophosphatidylethanolamine (LPE), can also transport lysophosphatidylglycerol (LPG), but not other anionic lysophospholipids, sphingosine, nor sphingomyelin. Transports lysophospholipids with saturated, monounsaturated, and polyunsaturated fatty acids, such as 1-hexadecanoyl-sn-glycero-3-phosphocholine, 1-(9Z-octadecenoyl)-sn-glycero-3-phosphocholine and 1-(4Z,7Z,10Z,13Z,16Z,19Z-docosahexaenoyl)-sn-glycero-3-phosphocholine, respectively. Can also transport lysoplasmalogen (LPC with a fatty alcohol) such as 1-(1Z-hexadecenyl)-sn-glycero-3-phosphocholine. Essential player in lysosomal homeostasis. Crucial for cell survival under conditions of nutrient limitation. May be involved in necrotic or autophagic cell death. The chain is Protein spinster homolog 1 (SPNS1) from Bos taurus (Bovine).